Consider the following 1358-residue polypeptide: Phosphoinositide 3-kinase regulatory subunit 4 (1358 aa).

Glycine 2 carries N-myristoyl glycine lipidation. Residues 26 to 324 (FEYDKSLGST…AFPEVFYTFL (299 aa)) form the Protein kinase domain. Residues 32 to 40 (LGSTRFFKV) and lysine 53 contribute to the ATP site. Residue aspartate 148 is the Proton acceptor of the active site. HEAT repeat units follow at residues 413-450 (ILLD…LVQE), 458-495 (IYPE…TALR), 572-610 (KAND…YVGW), and 612-648 (SSSI…LGLL). Phosphoserine is present on residues serine 808, serine 813, serine 853, and serine 865. A disordered region spans residues 875 to 899 (LPKTSDHEVVPTGKSPRSESSAGVC). 6 WD repeats span residues 991–1030 (EHKS…GKTT), 1040–1079 (RIGG…LPKS), 1093–1134 (KEDG…NAWT), 1139–1178 (LKSG…PISS), 1182–1223 (PSRA…RRLT), and 1237–1278 (PSPH…RSYV). Positions 1307–1326 (KQKVGPSDDTPRRGPESLPV) are disordered. The span at 1315 to 1326 (DTPRRGPESLPV) shows a compositional bias: basic and acidic residues. Phosphothreonine is present on threonine 1316. A WD 7 repeat occupies 1327–1358 (GHHDIITDIATFQTTQGFIVTASRDGIVKVWK).

It belongs to the protein kinase superfamily. Ser/Thr protein kinase family. Component of the PI3K (PI3KC3/PI3K-III/class III phosphatidylinositol 3-kinase) complex the core of which is composed of the catalytic subunit PIK3C3, the regulatory subunit PIK3R4 and BECN1 associating with additional regulatory/auxiliary subunits to form alternative complex forms. Alternative complex forms containing a fourth regulatory subunit in a mutually exclusive manner are PI3K complex I (PI3KC3-C1) containing ATG14, and PI3K complex II (PI3KC3-C2) containing UVRAG. PI3KC3-C1 displays a V-shaped architecture with PIK3R4 serving as a bridge between PIK3C3 and the ATG14:BECN1 subcomplex. Both, PI3KC3-C1 and PI3KC3-C2, can associate with further regulatory subunits, such as RUBCN, SH3GLB1/Bif-1, AMBRA1 and NRBF2. PI3KC3-C1 probably associates with PIK3CB. Interacts with RAB7A in the presence of PIK3C3/VPS34. Interacts with NRBF2. Interacts with ARMC3. The cofactor is Mn(2+). Post-translationally, myristoylated. In terms of processing, probably autophosphorylated.

The protein resides in the late endosome. It is found in the cytoplasmic vesicle. Its subcellular location is the autophagosome. The protein localises to the membrane. It carries out the reaction L-seryl-[protein] + ATP = O-phospho-L-seryl-[protein] + ADP + H(+). The enzyme catalyses L-threonyl-[protein] + ATP = O-phospho-L-threonyl-[protein] + ADP + H(+). In terms of biological role, regulatory subunit of the PI3K complex that mediates formation of phosphatidylinositol 3-phosphate; different complex forms are believed to play a role in multiple membrane trafficking pathways: PI3KC3-C1 is involved in initiation of autophagosomes and PI3KC3-C2 in maturation of autophagosomes and endocytosis. Involved in regulation of degradative endocytic trafficking and cytokinesis, probably in the context of PI3KC3-C2. The protein is Phosphoinositide 3-kinase regulatory subunit 4 (Pik3r4) of Rattus norvegicus (Rat).